A 585-amino-acid chain; its full sequence is Efflux pump dotC (585 aa).

Residues Met1–Glu34 are compositionally biased toward basic and acidic residues. The segment at Met1 to Leu45 is disordered. Asn10 carries N-linked (GlcNAc...) asparagine glycosylation. Residues Glu35 to Ala44 are compositionally biased toward acidic residues. Residues Ser51–Leu71 form a helical membrane-spanning segment. Asn91 carries an N-linked (GlcNAc...) asparagine glycan. A run of 13 helical transmembrane segments spans residues Ala94 to Trp114, Ala132 to Thr152, Gly158 to Leu178, Gly186 to Phe206, Trp214 to Leu234, Phe247 to Phe267, Ser280 to Val300, Ala323 to Leu343, Pro353 to Ala373, Leu385 to Phe405, Leu414 to Val434, Thr449 to Tyr471, and Ser524 to Val544. Positions Lys564–Ser585 are disordered.

The protein belongs to the major facilitator superfamily. TCR/Tet family.

Its subcellular location is the cell membrane. It is found in the vacuole membrane. In terms of biological role, efflux pump; part of the gene cluster that mediates the biosynthesis of dothistromin (DOTH), a polyketide toxin very similar in structure to the aflatoxin precursor, versicolorin B. One function of dotC may be to transport early-stage dothistromin biosynthetic intermediates from the cytoplasm into vacuoles, thereby affecting the rate of dothistromin production. The chain is Efflux pump dotC from Dothistroma septosporum (Red band needle blight fungus).